The chain runs to 555 residues: Beta-fructofuranosidase, cell wall isozyme (555 aa).

A signal peptide spans methionine 1 to alanine 22. Substrate-binding positions include tryptophan 58 to aspartate 61, glutamine 77, tryptophan 85, and tryptophan 120 to serine 121. Aspartate 61 is a catalytic residue. Aspartate 140 is an active-site residue. N-linked (GlcNAc...) asparagine glycosylation is found at asparagine 154 and asparagine 181. Substrate is bound by residues arginine 186–aspartate 187, glutamate 241, and aspartate 277. Asparagine 337 carries N-linked (GlcNAc...) asparagine glycosylation. Cysteine 435 and cysteine 481 are joined by a disulfide.

Belongs to the glycosyl hydrolase 32 family.

The catalysed reaction is Hydrolysis of terminal non-reducing beta-D-fructofuranoside residues in beta-D-fructofuranosides.. This is Beta-fructofuranosidase, cell wall isozyme (BFRUCT1) from Pisum sativum (Garden pea).